The sequence spans 321 residues: tRNA-dihydrouridine synthase B (321 aa).

Residues 16–18 and glutamine 70 each bind FMN; that span reads PMA. Cysteine 100 serves as the catalytic Proton donor. Residues lysine 139, 200-202, and 224-225 each bind FMN; these read NGD and GR.

This sequence belongs to the Dus family. DusB subfamily. Requires FMN as cofactor.

It carries out the reaction a 5,6-dihydrouridine in tRNA + NAD(+) = a uridine in tRNA + NADH + H(+). The catalysed reaction is a 5,6-dihydrouridine in tRNA + NADP(+) = a uridine in tRNA + NADPH + H(+). Catalyzes the synthesis of 5,6-dihydrouridine (D), a modified base found in the D-loop of most tRNAs, via the reduction of the C5-C6 double bond in target uridines. The chain is tRNA-dihydrouridine synthase B from Yersinia pestis.